Consider the following 350-residue polypeptide: MFIRPVLSSSLGHAARSSLRSQAPAVRQYATEAGKSSGGSNLPLVLALGGVAGIGAWYGLGGFDDPKKVSNKIQEKGKEAVDQAKGAVEGGALNKDQFVEFTLKEIKPYNHDSATLIFELPEGKKPGMGVASAVVVKAVGDGLKDDQGKDVIRPYTPITSPDTVGHMDFLVKKYPGGKMTTYMHSMKPGDKLGIKGPIAKFAYKANEFESIGMIAGGSGITPMYQVIQDIASNPSDKTKVTLIYSNKTEQDILLREQFDQLAKKDDRFTIIYGLDKLPKGFNGFEGYVTEDLVKKHLPQPELADKAKIFVCGPPPQVEAISGKKGPKGSQGELKGLLAKLGYQADQVYKF.

Residues 43 to 63 (PLVLALGGVAGIGAWYGLGGF) form a helical membrane-spanning segment. The FAD-binding FR-type domain occupies 96 to 204 (DQFVEFTLKE…KGPIAKFAYK (109 aa)). Residue 207–242 (EFESIGMIAGGSGITPMYQVIQDIASNPSDKTKVTL) participates in FAD binding.

It belongs to the flavoprotein pyridine nucleotide cytochrome reductase family. Requires FAD as cofactor.

It is found in the mitochondrion outer membrane. It catalyses the reaction 2 Fe(III)-[cytochrome b5] + NADH = 2 Fe(II)-[cytochrome b5] + NAD(+) + H(+). Functionally, may mediate the reduction of outer membrane cytochrome b5. This Mycosarcoma maydis (Corn smut fungus) protein is NADH-cytochrome b5 reductase 2 (MCR1).